The primary structure comprises 155 residues: Transcriptional repressor NrdR (155 aa).

The span at 1–11 (MECPNCHQNAS) shows a compositional bias: polar residues. A disordered region spans residues 1–22 (MECPNCHQNASRVIDSRPSDEN). A zinc finger spans residues 3–34 (CPNCHQNASRVIDSRPSDENRAIRRRRECENC). In terms of domain architecture, ATP-cone spans 49–139 (LLVIKNDGTR…IYREFKDMSS (91 aa)).

Belongs to the NrdR family. Zn(2+) serves as cofactor.

Functionally, negatively regulates transcription of bacterial ribonucleotide reductase nrd genes and operons by binding to NrdR-boxes. The chain is Transcriptional repressor NrdR from Lactobacillus helveticus (strain DPC 4571).